The following is a 253-amino-acid chain: 3-deoxy-manno-octulosonate cytidylyltransferase (253 aa).

Belongs to the KdsB family.

Its subcellular location is the cytoplasm. It catalyses the reaction 3-deoxy-alpha-D-manno-oct-2-ulosonate + CTP = CMP-3-deoxy-beta-D-manno-octulosonate + diphosphate. It functions in the pathway nucleotide-sugar biosynthesis; CMP-3-deoxy-D-manno-octulosonate biosynthesis; CMP-3-deoxy-D-manno-octulosonate from 3-deoxy-D-manno-octulosonate and CTP: step 1/1. It participates in bacterial outer membrane biogenesis; lipopolysaccharide biosynthesis. Functionally, activates KDO (a required 8-carbon sugar) for incorporation into bacterial lipopolysaccharide in Gram-negative bacteria. The polypeptide is 3-deoxy-manno-octulosonate cytidylyltransferase (Haemophilus ducreyi (strain 35000HP / ATCC 700724)).